The chain runs to 35 residues: Cupiennin-2a (35 aa).

Lys-35 carries the lysine amide modification.

As to expression, expressed by the venom gland.

It localises to the secreted. This Cupiennius salei (American wandering spider) protein is Cupiennin-2a.